The sequence spans 415 residues: Gamma-glutamyl phosphate reductase (415 aa).

This sequence belongs to the gamma-glutamyl phosphate reductase family.

The protein localises to the cytoplasm. It carries out the reaction L-glutamate 5-semialdehyde + phosphate + NADP(+) = L-glutamyl 5-phosphate + NADPH + H(+). Its pathway is amino-acid biosynthesis; L-proline biosynthesis; L-glutamate 5-semialdehyde from L-glutamate: step 2/2. Its function is as follows. Catalyzes the NADPH-dependent reduction of L-glutamate 5-phosphate into L-glutamate 5-semialdehyde and phosphate. The product spontaneously undergoes cyclization to form 1-pyrroline-5-carboxylate. In Bacillus cereus (strain ZK / E33L), this protein is Gamma-glutamyl phosphate reductase.